A 103-amino-acid polypeptide reads, in one-letter code: UPF0102 protein aq_041 (103 aa).

The protein belongs to the UPF0102 family.

This chain is UPF0102 protein aq_041, found in Aquifex aeolicus (strain VF5).